The sequence spans 192 residues: uncharacterized protein (192 aa).

One can recognise a Nudix hydrolase domain in the interval 29-160 (QRQAAVLIPV…PLDVYRRGNS (132 aa)). Residues 67 to 89 (GAVDSTDASLIAAALREAQEEVA) carry the Nudix box motif. Mg(2+) contacts are provided by glutamate 83 and glutamate 87.

The protein belongs to the Nudix hydrolase family. PCD1 subfamily. Mn(2+) serves as cofactor. Requires Mg(2+) as cofactor.

Functionally, probably mediates the hydrolysis of some nucleoside diphosphate derivatives. This is an uncharacterized protein from Salmonella agona (strain SL483).